The chain runs to 36 residues: Potassium channel toxin alpha-KTx 23.1 (36 aa).

Disulfide bonds link cysteine 6–cysteine 26, cysteine 12–cysteine 31, cysteine 16–cysteine 33, and cysteine 21–cysteine 36. Cysteine amide is present on cysteine 36.

It belongs to the short scorpion toxin superfamily. Potassium channel inhibitor family. Alpha-KTx 23 subfamily. In terms of tissue distribution, expressed by the venom gland.

Its subcellular location is the secreted. Voltage-gated potassium channel inhibitor. Selectively and irreversibly binds (K(d)=2.9 pM) and blocks hKv1.3/KCNA3 potassium channels of human T-lymphocytes. Weakly blocks hKCa3.1/KCNN4, mKv1.1/KCNA1, and hKv1.2/KCNA2 channels. In vivo, high doses (200 ug) produce no symptoms of intoxication when injected into mice. The chain is Potassium channel toxin alpha-KTx 23.1 from Vaejovis mexicanus smithi (Mexican scorpion).